We begin with the raw amino-acid sequence, 252 residues long: F-box/SPRY domain-containing protein 1 (252 aa).

In terms of domain architecture, F-box spans 1–48 (MVDPLCNYNVLEAIFSYLELNDLYRCSQVCKSWYHFLNDENSDVWRWH). The B30.2/SPRY domain occupies 58–250 (VKSDLLASVS…VSMVYLGTPL (193 aa)).

Belongs to the FBXO45/Fsn family. Component of an E3 ubiquitin ligase complex composed of hiw and Fsn.

It is found in the synapse. It participates in protein modification; protein ubiquitination. In terms of biological role, required in the presynaptic motoneuron to down-regulate the levels of wnd and restrain synaptic terminal growth at the neuromuscular junction (NMJ). The protein is F-box/SPRY domain-containing protein 1 of Drosophila virilis (Fruit fly).